The chain runs to 2213 residues: Protein sidekick-1 (2213 aa).

The tract at residues 1 to 73 is disordered; it reads MARGARPSAA…GAGRCGGRRA (73 aa). Residues 23–38 are compositionally biased toward low complexity; that stretch reads AGPGRPRGSPPGRARP. 5 consecutive Ig-like C2-type domains span residues 104–186, 191–277, 293–378, 386–476, and 480–569; these read PYFK…SEVQ, GSFM…SPFI, PTIV…RATA, PYFT…LDVT, and PVFT…ATLT. C126 and C169 are joined by a disulfide. N271 and N301 each carry an N-linked (GlcNAc...) asparagine glycan. 3 disulfide bridges follow: C315–C362, C408–C458, and C501–C553. N-linked (GlcNAc...) asparagine glycosylation is found at N550, N563, and N572. The region spanning 574–663 is the Ig-like C2-type 6 domain; the sequence is TSIVHPPEDH…GNDSRMARLE (90 aa). C595 and C647 are disulfide-bonded. 7 N-linked (GlcNAc...) asparagine glycosylation sites follow: N655, N679, N782, N821, N882, N1015, and N1024. Fibronectin type-III domains follow at residues 670–766, 771–867, 872–970, 974–1068, 1072–1171, 1176–1274, 1279–1376, 1380–1474, 1479–1576, 1581–1699, 1704–1800, 1804–1899, and 1902–2000; these read SPQN…LPEE, PPKN…TLQG, PPQN…TQED, AVGH…VPPD, APSN…TLQA, APTS…TRES, APEN…TKDD, PPVR…TEKR, PPRE…TLQD, PPGS…VGEA, APQN…THQA, APSF…AGPA, and SPGS…SAQV. N-linked (GlcNAc...) asparagine glycosylation is found at N1282 and N1333. Residues N1654, N1748, N1767, N1819, and N1893 are each glycosylated (N-linked (GlcNAc...) asparagine). A helical membrane pass occupies residues 2010 to 2030; it reads FLLVMALSSLIVILLVVFALV. At 2031–2213 the chain is on the cytoplasmic side; sequence LHGQNKKYKN…TPLTGFSSFV (183 aa). The tract at residues 2075–2098 is disordered; sequence STFSKKNGTRSPPRPSPGGLHYSD. The PDZ-binding signature appears at 2207 to 2213; sequence TGFSSFV.

Belongs to the sidekick family. As to quaternary structure, homodimer; mediates homophilic interactions to promote cell adhesion. Up-regulated in glomeruli in HIV-associated nephropathy. In diseased glomeruli, significantly overexpressed and the expression is no longer restricted to mesangial cells but includes podocytes and parietal epithelial cells.

The protein localises to the cell membrane. It localises to the synapse. Functionally, adhesion molecule that promotes lamina-specific synaptic connections in the retina. Expressed in specific subsets of interneurons and retinal ganglion cells (RGCs) and promotes synaptic connectivity via homophilic interactions. This is Protein sidekick-1 from Homo sapiens (Human).